The following is a 606-amino-acid chain: Retrovirus-related Pol polyprotein from type-1 retrotransposable element R2 (606 aa).

Residues 1–208 form the Reverse transcriptase domain; the sequence is GTLANIIMLE…NTFKYLGLTF (208 aa). The tract at residues 331 to 606 is nucleic acid-binding endonuclease; that stretch reads IFNIEGPARS…PPDPPRPVPP (276 aa).

It carries out the reaction DNA(n) + a 2'-deoxyribonucleoside 5'-triphosphate = DNA(n+1) + diphosphate. The polypeptide is Retrovirus-related Pol polyprotein from type-1 retrotransposable element R2 (Popillia japonica (Japanese beetle)).